We begin with the raw amino-acid sequence, 321 residues long: Probable UDP-sugar transporter protein SLC35A4 (321 aa).

Over 1-22 the chain is Cytoplasmic; sequence MYSVNIEPDGSNHSPSRKRLKQ. A helical transmembrane segment spans residues 23–43; it reads ILWGLMLVLSVTIYGSHAPLI. Residues 44 to 56 lie on the Lumenal side of the membrane; that stretch reads YLCKVNGEIPFSS. A helical membrane pass occupies residues 57 to 77; that stretch reads SAVVLLIELSKFVISLVFFLI. Residues 78-91 lie on the Cytoplasmic side of the membrane; sequence QDWKSLKASVSWHL. The helical transmembrane segment at 92 to 112 threads the bilayer; the sequence is AAPYAVPAVLYGANNNLVVYI. Residues 113-119 are Lumenal-facing; it reads QHFMDPS. Residues 120–140 form a helical membrane-spanning segment; the sequence is SFQVLSNLKIVSTAVLYSLFL. Residues 141–149 lie on the Cytoplasmic side of the membrane; the sequence is RQRLSVRRW. Residues 150–170 form a helical membrane-spanning segment; sequence LSVFLLLAAGVFYSYGGIQDL. Topologically, residues 171-180 are lumenal; sequence EKVSSDTNLY. The helical transmembrane segment at 181–201 threads the bilayer; sequence VTLPGLLLMLAYCLISGLSAV. At 202–211 the chain is on the cytoplasmic side; that stretch reads YTEMTLKTQK. The helical transmembrane segment at 212–232 threads the bilayer; that stretch reads IPLNMQNLYLYSFGIIINLTA. Residues 233–247 are Lumenal-facing; that stretch reads HLTSSKNSDFFDGFS. A helical membrane pass occupies residues 248–268; the sequence is VWVWVIILSQALNGLIMSLVM. Over 269 to 321 the chain is Cytoplasmic; the sequence is KLSNNITRLFIISFSMLANGFLSFILFQLQLTALFFLAVVLIGLAVYMYYGMK.

Belongs to the nucleotide-sugar transporter family. SLC35A subfamily.

Its subcellular location is the golgi apparatus membrane. The catalysed reaction is CDP-L-ribitol(in) + CDP(out) = CDP-L-ribitol(out) + CDP(in). In terms of biological role, mediates the transport of CDP-ribitol. Does not exhibit CMP-sialic acid, UDP-galactose and UDP-N-acetylglucosamine transport activity. The polypeptide is Probable UDP-sugar transporter protein SLC35A4 (Xenopus tropicalis (Western clawed frog)).